Reading from the N-terminus, the 180-residue chain is Large ribosomal subunit protein uL5c (180 aa).

The protein belongs to the universal ribosomal protein uL5 family. Part of the 50S ribosomal subunit; contacts the 5S rRNA.

The protein localises to the plastid. The protein resides in the chloroplast. Functionally, binds 5S rRNA, forms part of the central protuberance of the 50S subunit. The chain is Large ribosomal subunit protein uL5c (rpl5) from Tupiella akineta (Green alga).